The primary structure comprises 436 residues: ATP-dependent protease ATPase subunit HslU (436 aa).

ATP contacts are provided by residues Ile-19, 61-65, Asp-249, Glu-314, and Arg-386; that span reads GVGKT.

It belongs to the ClpX chaperone family. HslU subfamily. A double ring-shaped homohexamer of HslV is capped on each side by a ring-shaped HslU homohexamer. The assembly of the HslU/HslV complex is dependent on binding of ATP.

The protein resides in the cytoplasm. In terms of biological role, ATPase subunit of a proteasome-like degradation complex; this subunit has chaperone activity. The binding of ATP and its subsequent hydrolysis by HslU are essential for unfolding of protein substrates subsequently hydrolyzed by HslV. HslU recognizes the N-terminal part of its protein substrates and unfolds these before they are guided to HslV for hydrolysis. This Bartonella henselae (strain ATCC 49882 / DSM 28221 / CCUG 30454 / Houston 1) (Rochalimaea henselae) protein is ATP-dependent protease ATPase subunit HslU.